A 207-amino-acid chain; its full sequence is ATP-dependent Clp protease proteolytic subunit 1 (207 aa).

The active-site Nucleophile is S103. The active site involves H128.

Belongs to the peptidase S14 family. In terms of assembly, fourteen ClpP subunits assemble into 2 heptameric rings which stack back to back to give a disk-like structure with a central cavity, resembling the structure of eukaryotic proteasomes.

The protein resides in the cytoplasm. It carries out the reaction Hydrolysis of proteins to small peptides in the presence of ATP and magnesium. alpha-casein is the usual test substrate. In the absence of ATP, only oligopeptides shorter than five residues are hydrolyzed (such as succinyl-Leu-Tyr-|-NHMec, and Leu-Tyr-Leu-|-Tyr-Trp, in which cleavage of the -Tyr-|-Leu- and -Tyr-|-Trp bonds also occurs).. In terms of biological role, cleaves peptides in various proteins in a process that requires ATP hydrolysis. Has a chymotrypsin-like activity. Plays a major role in the degradation of misfolded proteins. In Synechococcus sp. (strain CC9605), this protein is ATP-dependent Clp protease proteolytic subunit 1.